The primary structure comprises 90 residues: Putative membrane protein insertion efficiency factor (90 aa).

The interval 68–90 (VPAHFSLRRNPQYKEEDHRGKKR) is disordered. The segment covering 79–90 (QYKEEDHRGKKR) has biased composition (basic and acidic residues).

This sequence belongs to the UPF0161 family.

It is found in the cell membrane. Could be involved in insertion of integral membrane proteins into the membrane. The protein is Putative membrane protein insertion efficiency factor of Lactiplantibacillus plantarum (strain ATCC BAA-793 / NCIMB 8826 / WCFS1) (Lactobacillus plantarum).